The chain runs to 203 residues: Small ribosomal subunit protein uS4 (203 aa).

An S4 RNA-binding domain is found at 93–153; it reads QRLDSLVYRL…DKSKNIVPIQ (61 aa).

The protein belongs to the universal ribosomal protein uS4 family. As to quaternary structure, part of the 30S ribosomal subunit. Contacts protein S5. The interaction surface between S4 and S5 is involved in control of translational fidelity.

Its function is as follows. One of the primary rRNA binding proteins, it binds directly to 16S rRNA where it nucleates assembly of the body of the 30S subunit. In terms of biological role, with S5 and S12 plays an important role in translational accuracy. This Leuconostoc citreum (strain KM20) protein is Small ribosomal subunit protein uS4.